The sequence spans 593 residues: High affinity cGMP-specific 3',5'-cyclic phosphodiesterase 9A (593 aa).

The interval 87–142 (SAGVEDKRTTSRGQSAERPLRDRRVVGLEQPRREGAFESGQVEPRPREPQGCCQEG) is disordered. The span at 104–122 (RPLRDRRVVGLEQPRREGA) shows a compositional bias: basic and acidic residues. The 322-residue stretch at 236–557 (PRRDVPTYPK…DRYEELKRID (322 aa)) folds into the PDEase domain. The active-site Proton donor is histidine 312. 312–316 (HNFRH) is a binding site for 3',5'-cyclic GMP. 3 residues coordinate Zn(2+): histidine 316, histidine 352, and aspartate 353. A 3',5'-cyclic GMP-binding site is contributed by aspartate 353. Aspartate 353 contacts Mg(2+). Position 379 is a phosphoserine (serine 379). 3',5'-cyclic GMP is bound by residues aspartate 462, tyrosine 484, and 512 to 513 (AQ). Zn(2+) is bound at residue aspartate 462. Positions 564-593 (QKKTDSLTSGATEKSRERSRDVKNSEGDCA) are disordered. Residues 576–593 (EKSRERSRDVKNSEGDCA) are compositionally biased toward basic and acidic residues.

The protein belongs to the cyclic nucleotide phosphodiesterase family. PDE9 subfamily. In terms of assembly, homodimer. It depends on Zn(2+) as a cofactor. Mg(2+) serves as cofactor.

It localises to the cell projection. Its subcellular location is the ruffle membrane. The protein resides in the cytoplasm. It is found in the perinuclear region. The protein localises to the golgi apparatus. It localises to the endoplasmic reticulum. Its subcellular location is the cell membrane. The protein resides in the sarcolemma. The enzyme catalyses 3',5'-cyclic GMP + H2O = GMP + H(+). It participates in purine metabolism; 3',5'-cyclic GMP degradation; GMP from 3',5'-cyclic GMP: step 1/1. With respect to regulation, specifically inhibited by a compound named 3r ((R)-2-((1-cyclopentyl-4-hydroxy-1H-pyrazolo[3,4-d]pyrimidin-6- yl)amino)-N-(4-methoxyphenyl)propanamide); the inhibitor forms a hydrogen bond with Tyr-484, Ala-512 and Gln-513. Specifically hydrolyzes the second messenger cGMP, which is a key regulator of many important physiological processes. Highly specific: compared to other members of the cyclic nucleotide phosphodiesterase family, has the highest affinity and selectivity for cGMP. Specifically regulates natriuretic-peptide-dependent cGMP signaling in heart, acting as a regulator of cardiac hypertrophy in myocytes and muscle. Does not regulate nitric oxide-dependent cGMP in heart. Additional experiments are required to confirm whether its ability to hydrolyze natriuretic-peptide-dependent cGMP is specific to heart or is a general feature of the protein. In brain, involved in cognitive function, such as learning and long-term memory. The protein is High affinity cGMP-specific 3',5'-cyclic phosphodiesterase 9A (PDE9A) of Pan troglodytes (Chimpanzee).